Here is a 263-residue protein sequence, read N- to C-terminus: N-acyl homoserine lactonase AttM (263 aa).

Zn(2+)-binding residues include H103, H105, D107, H108, H180, D202, and H247.

Belongs to the metallo-beta-lactamase superfamily. Zn(2+) serves as cofactor.

The catalysed reaction is an N-acyl-L-homoserine lactone + H2O = an N-acyl-L-homoserine + H(+). This Azorhizobium caulinodans (strain ATCC 43989 / DSM 5975 / JCM 20966 / LMG 6465 / NBRC 14845 / NCIMB 13405 / ORS 571) protein is N-acyl homoserine lactonase AttM.